We begin with the raw amino-acid sequence, 103 residues long: Pyrimidine/purine nucleoside phosphorylase (103 aa).

Belongs to the nucleoside phosphorylase PpnP family.

The enzyme catalyses a purine D-ribonucleoside + phosphate = a purine nucleobase + alpha-D-ribose 1-phosphate. It carries out the reaction adenosine + phosphate = alpha-D-ribose 1-phosphate + adenine. The catalysed reaction is cytidine + phosphate = cytosine + alpha-D-ribose 1-phosphate. It catalyses the reaction guanosine + phosphate = alpha-D-ribose 1-phosphate + guanine. The enzyme catalyses inosine + phosphate = alpha-D-ribose 1-phosphate + hypoxanthine. It carries out the reaction thymidine + phosphate = 2-deoxy-alpha-D-ribose 1-phosphate + thymine. The catalysed reaction is uridine + phosphate = alpha-D-ribose 1-phosphate + uracil. It catalyses the reaction xanthosine + phosphate = alpha-D-ribose 1-phosphate + xanthine. Catalyzes the phosphorolysis of diverse nucleosides, yielding D-ribose 1-phosphate and the respective free bases. Can use uridine, adenosine, guanosine, cytidine, thymidine, inosine and xanthosine as substrates. Also catalyzes the reverse reactions. This is Pyrimidine/purine nucleoside phosphorylase from Shewanella baltica (strain OS223).